Reading from the N-terminus, the 244-residue chain is Ribonuclease PH (244 aa).

Phosphate is bound by residues R87 and 125–127 (GTR).

Belongs to the RNase PH family. Homohexameric ring arranged as a trimer of dimers.

It carries out the reaction tRNA(n+1) + phosphate = tRNA(n) + a ribonucleoside 5'-diphosphate. Functionally, phosphorolytic 3'-5' exoribonuclease that plays an important role in tRNA 3'-end maturation. Removes nucleotide residues following the 3'-CCA terminus of tRNAs; can also add nucleotides to the ends of RNA molecules by using nucleoside diphosphates as substrates, but this may not be physiologically important. Probably plays a role in initiation of 16S rRNA degradation (leading to ribosome degradation) during starvation. This is Ribonuclease PH from Synechococcus sp. (strain JA-2-3B'a(2-13)) (Cyanobacteria bacterium Yellowstone B-Prime).